We begin with the raw amino-acid sequence, 376 residues long: Chaperone protein DnaJ (376 aa).

Positions 5–69 (DYYEILGVDR…EKRARYDRFG (65 aa)) constitute a J domain. The CR-type zinc finger occupies 135–217 (GLETDIRVPH…CNGKGVVRKT (83 aa)). 8 residues coordinate Zn(2+): C148, C151, C165, C168, C191, C194, C205, and C208. CXXCXGXG motif repeat units lie at residues 148-155 (CPVCHGSR), 165-172 (CQTCGGSG), 191-198 (CPDCQGEG), and 205-212 (CSNCNGKG).

Belongs to the DnaJ family. Homodimer. Zn(2+) serves as cofactor.

The protein localises to the cytoplasm. Its function is as follows. Participates actively in the response to hyperosmotic and heat shock by preventing the aggregation of stress-denatured proteins and by disaggregating proteins, also in an autonomous, DnaK-independent fashion. Unfolded proteins bind initially to DnaJ; upon interaction with the DnaJ-bound protein, DnaK hydrolyzes its bound ATP, resulting in the formation of a stable complex. GrpE releases ADP from DnaK; ATP binding to DnaK triggers the release of the substrate protein, thus completing the reaction cycle. Several rounds of ATP-dependent interactions between DnaJ, DnaK and GrpE are required for fully efficient folding. Also involved, together with DnaK and GrpE, in the DNA replication of plasmids through activation of initiation proteins. The protein is Chaperone protein DnaJ of Methanothermobacter thermautotrophicus (strain ATCC 29096 / DSM 1053 / JCM 10044 / NBRC 100330 / Delta H) (Methanobacterium thermoautotrophicum).